Consider the following 357-residue polypeptide: CD4+ T-cell-stimulating antigen (357 aa).

An N-terminal signal peptide occupies residues 1–22; that stretch reads MKKRTFALALSMIIASGVILGA. Cys-23 carries the N-palmitoyl cysteine lipid modification. Cys-23 is lipidated: S-diacylglycerol cysteine.

Belongs to the BMP lipoprotein family.

It is found in the cell membrane. The chain is CD4+ T-cell-stimulating antigen (tcsA) from Listeria monocytogenes serovar 1/2a (strain ATCC BAA-679 / EGD-e).